The following is a 701-amino-acid chain: C6 finger domain transcription factor nscR (701 aa).

Residues 17-43 (CELCRERKVKCDKLDPCTNCSSAGVIC) constitute a DNA-binding region (zn(2)-C6 fungal-type).

It localises to the nucleus. Functionally, transcription factor that specifically regulates the neosartoricin B biosynthesis gene cluster. This is C6 finger domain transcription factor nscR from Arthroderma benhamiae (strain ATCC MYA-4681 / CBS 112371) (Trichophyton mentagrophytes).